Reading from the N-terminus, the 356-residue chain is Phosphoribosyl pyrophosphate synthase-associated protein 1 (356 aa).

M1 is modified (N-acetylmethionine). N2 is modified (N-acetylproline). Residues S177 and S215 each carry the phosphoserine modification.

The protein belongs to the ribose-phosphate pyrophosphokinase family. Binds to PRPS1 and PRPS2. Ubiquitous.

In terms of biological role, seems to play a negative regulatory role in 5-phosphoribose 1-diphosphate synthesis. The sequence is that of Phosphoribosyl pyrophosphate synthase-associated protein 1 (PRPSAP1) from Homo sapiens (Human).